The chain runs to 243 residues: Proteasome subunit beta (243 aa).

Residues 1-46 (MFNPNNGSEFARNRARLDDTPNPYEPEVGSLPEGDRSQAGSDTVNK) form a disordered region. The propeptide at 1–48 (MFNPNNGSEFARNRARLDDTPNPYEPEVGSLPEGDRSQAGSDTVNKTG) is removed in mature form; by autocatalysis. Catalysis depends on Thr-49, which acts as the Nucleophile.

This sequence belongs to the peptidase T1B family. In terms of assembly, the 20S proteasome core is composed of 14 alpha and 14 beta subunits that assemble into four stacked heptameric rings, resulting in a barrel-shaped structure. The two inner rings, each composed of seven catalytic beta subunits, are sandwiched by two outer rings, each composed of seven alpha subunits. The catalytic chamber with the active sites is on the inside of the barrel. Has a gated structure, the ends of the cylinder being occluded by the N-termini of the alpha-subunits. Is capped at one or both ends by the proteasome regulatory ATPase, PAN.

It localises to the cytoplasm. It carries out the reaction Cleavage of peptide bonds with very broad specificity.. Its activity is regulated as follows. The formation of the proteasomal ATPase PAN-20S proteasome complex, via the docking of the C-termini of PAN into the intersubunit pockets in the alpha-rings, triggers opening of the gate for substrate entry. Interconversion between the open-gate and close-gate conformations leads to a dynamic regulation of the 20S proteasome proteolysis activity. Component of the proteasome core, a large protease complex with broad specificity involved in protein degradation. The protein is Proteasome subunit beta of Halobacterium salinarum (strain ATCC 29341 / DSM 671 / R1).